Reading from the N-terminus, the 88-residue chain is ATP synthase subunit c (88 aa).

2 helical membrane-spanning segments follow: residues 10–30 and 68–88; these read ILAA…GPGI and GIYS…IRLL.

The protein belongs to the ATPase C chain family. F-type ATPases have 2 components, F(1) - the catalytic core - and F(0) - the membrane proton channel. F(1) has five subunits: alpha(3), beta(3), gamma(1), delta(1), epsilon(1). F(0) has three main subunits: a(1), b(2) and c(10-14). The alpha and beta chains form an alternating ring which encloses part of the gamma chain. F(1) is attached to F(0) by a central stalk formed by the gamma and epsilon chains, while a peripheral stalk is formed by the delta and b chains.

The protein resides in the cell membrane. Functionally, f(1)F(0) ATP synthase produces ATP from ADP in the presence of a proton or sodium gradient. F-type ATPases consist of two structural domains, F(1) containing the extramembraneous catalytic core and F(0) containing the membrane proton channel, linked together by a central stalk and a peripheral stalk. During catalysis, ATP synthesis in the catalytic domain of F(1) is coupled via a rotary mechanism of the central stalk subunits to proton translocation. Its function is as follows. Key component of the F(0) channel; it plays a direct role in translocation across the membrane. A homomeric c-ring of between 10-14 subunits forms the central stalk rotor element with the F(1) delta and epsilon subunits. The sequence is that of ATP synthase subunit c from Alkaliphilus oremlandii (strain OhILAs) (Clostridium oremlandii (strain OhILAs)).